A 323-amino-acid chain; its full sequence is MADVDKLNIDSIIQRLLEVRGSKPGKNVQLQENEIRGLCLKSREIFLSQPILLELEAPLKICGDIHGQYYDLLRLFEYGGFPPESNYLFLGDYVDRGKQSLETICLLLAYKIKYPENFFLLRGNHECASINRIYGFYDECKRRYNIKLWKTFTDCFNCLPIAAIVDEKIFCCHGGLSPDLQSMEQIRRIMRPTDVPDQGLLCDLLWSDPDKDVLGWGENDRGVSFTFGAEVVAKFLHKHDLDLICRAHQVVEDGYEFFAKRQLVTLFSAPNYCGEFDNAGAMMSVDETLMCSFQILKPAEKKKPNASRPVTPPRGIITKQAKK.

Mn(2+) is bound by residues D64, H66, D92, and N124. Catalysis depends on H125, which acts as the Proton donor. 2 residues coordinate Mn(2+): H173 and H248. The disordered stretch occupies residues 301 to 323 (KKKPNASRPVTPPRGIITKQAKK).

This sequence belongs to the PPP phosphatase family. PP-1 subfamily. PP1 comprises a catalytic subunit, ppp1c1, ppp1cb or ppp1cc, which is folded into its native form by inhibitor 2 and glycogen synthetase kinase 3, and then is complexed to one or several targeting or regulatory subunits. Mn(2+) is required as a cofactor.

Its subcellular location is the cytoplasm. It is found in the nucleus. The protein localises to the cleavage furrow. The protein resides in the nucleolus. It localises to the nucleoplasm. Its subcellular location is the chromosome. It is found in the centromere. The protein localises to the kinetochore. The protein resides in the nucleus speckle. It localises to the midbody. Its subcellular location is the mitochondrion. The catalysed reaction is O-phospho-L-seryl-[protein] + H2O = L-seryl-[protein] + phosphate. The enzyme catalyses O-phospho-L-threonyl-[protein] + H2O = L-threonyl-[protein] + phosphate. Functionally, protein phosphatase that associates with over 200 regulatory proteins to form highly specific holoenzymes which dephosphorylate hundreds of biological targets. Protein phosphatase 1 (PP1) is essential for cell division, and participates in the regulation of glycogen metabolism, muscle contractility and protein synthesis. Promotes nuclear envelope reassembly by targeting nuclear membrane vesicles to chromatin at the end of mitosis. Acts by dephosphorylating membrane proteins such as lamin B receptor (lbr) to regulate the binding of membrane proteins to chromatin. This Xenopus laevis (African clawed frog) protein is Serine/threonine-protein phosphatase PP1-gamma catalytic subunit B (ppp1cc-b).